Consider the following 237-residue polypeptide: tRNA (guanine-N(7)-)-methyltransferase (237 aa).

4 residues coordinate S-adenosyl-L-methionine: aspartate 35, glutamate 60, asparagine 87, and aspartate 113. Aspartate 113 is an active-site residue. Lysine 117 and aspartate 149 together coordinate substrate.

Belongs to the class I-like SAM-binding methyltransferase superfamily. TrmB family.

The catalysed reaction is guanosine(46) in tRNA + S-adenosyl-L-methionine = N(7)-methylguanosine(46) in tRNA + S-adenosyl-L-homocysteine. It functions in the pathway tRNA modification; N(7)-methylguanine-tRNA biosynthesis. In terms of biological role, catalyzes the formation of N(7)-methylguanine at position 46 (m7G46) in tRNA. In Synechococcus sp. (strain CC9311), this protein is tRNA (guanine-N(7)-)-methyltransferase.